Consider the following 478-residue polypeptide: MHPNVYIPEAFLEKIQTILPAHLNMEDFIASCQKPLRKSIRVNTLKISVEAFLERAEAKGWKLSPVPWCNTGFWIEADESVVPLGNTAEHMSGLFYIQEASSMMPVSALFMNDESYDAVLDTAAAPGSKTTQIAALMNNEGVLVANEYAASRVKVLHANIERCGVRNAALSNFDGRVFGGWLPEQFDAVLLDAPCSGEGTVRKDEDAMKNWTQSSVVEIADTQKDLIESAFHALKPGGVMVYSTCTLSTEENQQVCHHLKETFGDAVEFESLKDLFENAEAALTEEGFLHIFPQVYDCEGFFVARIRKLTAVEAPKVKKRMGKFPFSKASNKESAEIAKQLQNTMDIKVPEDSTVWIREKDVWLFPDALEPMIGELRFSRMGIKIAEAHKNGYRWQHQVATALATGDEKNAIELTIEEAREWYMGRDVRPQNIPADMKTGKGEVFVKYEGAIIGLGKWVSNRIKNGLPRELVRDKNLF.

Residues 123-129 (AAAPGSK), glutamate 147, aspartate 174, and aspartate 192 contribute to the S-adenosyl-L-methionine site. The active-site Nucleophile is the cysteine 245.

This sequence belongs to the class I-like SAM-binding methyltransferase superfamily. RsmB/NOP family.

It localises to the cytoplasm. It catalyses the reaction cytidine(1407) in 16S rRNA + S-adenosyl-L-methionine = 5-methylcytidine(1407) in 16S rRNA + S-adenosyl-L-homocysteine + H(+). Its function is as follows. Specifically methylates the cytosine at position 1407 (m5C1407) of 16S rRNA. In Vibrio campbellii (strain ATCC BAA-1116), this protein is Ribosomal RNA small subunit methyltransferase F.